The following is a 59-amino-acid chain: Large ribosomal subunit protein uL30 (59 aa).

It belongs to the universal ribosomal protein uL30 family. In terms of assembly, part of the 50S ribosomal subunit.

The protein is Large ribosomal subunit protein uL30 of Ectopseudomonas mendocina (strain ymp) (Pseudomonas mendocina).